A 320-amino-acid chain; its full sequence is MQTRNAFSWLKKQITRSISVSLMIYILTRTSISSAYPIFAQQGYENPREATGRIVCANCHLANKPVEIEVPQAVLPDTVFEAVVRIPYDMQLKQVLANGKRGGLNVGAVLILPEGFELAPPDRISPEMKEKIGNLSFQSYRPNKKNILVIGPVPGQKYSEITFPILSPDPATKKDVHFLKYPIYVGGNRGRGQIYPDGSKSNNTVYNATAAGIVSKIIRKEKGGYEITITDASDGRQVVDIIPPGPELLVSEGESIKFDQPLTSNPNVGGFGQGDAEIVLQDPLRVQGLLFFLASVILAQIFLVLKKKQFEKVQLAEMNF.

Residues Met-1–Ala-35 form the signal peptide. Residues Tyr-36, Cys-56, Cys-59, and His-60 each coordinate heme. A helical membrane pass occupies residues Val-286 to Lys-306.

This sequence belongs to the cytochrome f family. As to quaternary structure, the 4 large subunits of the cytochrome b6-f complex are cytochrome b6, subunit IV (17 kDa polypeptide, petD), cytochrome f and the Rieske protein, while the 4 small subunits are PetG, PetL, PetM and PetN. The complex functions as a dimer. It depends on heme as a cofactor.

Its subcellular location is the plastid. It localises to the chloroplast thylakoid membrane. Component of the cytochrome b6-f complex, which mediates electron transfer between photosystem II (PSII) and photosystem I (PSI), cyclic electron flow around PSI, and state transitions. This Nicotiana sylvestris (Wood tobacco) protein is Cytochrome f.